Reading from the N-terminus, the 295-residue chain is MVRRLTSPRLEFEAAAIYEYPEHLRSFLNDLPTRPGVYLFHGESDTMPLYIGKSINIRSRVLSHLRTPDEAAMLRQSRRISWICTAGEIGALLLEARLIKEQQPLFNKRLRRNRQLCALQLNEKRVDVVYAKEVDFSRAPNLFGLFANRRAALQALQTIADEQKLCYGLLGLEPLSRGRACFRSALKRCAGACCGKESHDDHALRLRQSLERLRVVCWPWKGAVALKEQHPEMTQYHIIQNWLWLGAVNSLKEATTLIRAPAGFDHDGYKILCKPLLSGNYEITELDPVNDQQAS.

The GIY-YIG domain maps to 33 to 108; it reads TRPGVYLFHG…IKEQQPLFNK (76 aa).

Its function is as follows. Incises the DNA at the 3' side of a lesion during nucleotide excision repair. Incises the DNA farther away from the lesion than UvrC. Not able to incise the 5' site of a lesion. When a lesion remains because UvrC is not able to induce the 3' incision, Cho incises the DNA. Then UvrC makes the 5' incision. The combined action of Cho and UvrC broadens the substrate range of nucleotide excision repair. The chain is Excinuclease cho (cho) from Escherichia coli O6:H1 (strain CFT073 / ATCC 700928 / UPEC).